The primary structure comprises 234 residues: Conidial surface nicotinamide adenine dinucleotide glycohydrolase nadA (234 aa).

An N-terminal signal peptide occupies residues 1–20 (MIFTNAILVISALLPATVLS). The interval 21–117 (LQHTEDSLFP…LDTEEQPILG (97 aa)) is thump. Cystine bridges form between Cys33–Cys80 and Cys38–Cys50. N-linked (GlcNAc...) asparagine glycans are attached at residues Asn45, Asn95, and Asn118. A TNT domain is found at 120 to 212 (TLPVGMKLDR…GLIDDGYLRR (93 aa)). Arg129 is a catalytic residue. Residues Phe130, Thr136, and Arg148 each contribute to the NAD(+) site. Residue Gln194 is part of the active site. Ca(2+) contacts are provided by Ser216, Asp219, Glu220, and Glu223.

This sequence belongs to the fungal surface NADase family. As to quaternary structure, homodimer. Post-translationally, N-glycosylated.

It is found in the secreted. The catalysed reaction is NAD(+) + H2O = ADP-D-ribose + nicotinamide + H(+). It catalyses the reaction NADP(+) + H2O = ADP-D-ribose 2'-phosphate + nicotinamide + H(+). With respect to regulation, the catalytic activity is positively regulated by calcium via its binding to the calcium-binding site. Conidial surface nicotinamide adenine dinucleotide glycohydrolase that cleave NAD(+) and NADP(+) but not their reduced counterparts, NADH and NADPH. Lacks both ADP-ribosyl cyclase and base exchange activity and does not mediate synthesis of calcium messengers cADPR or NAADP. Plays a role in pathogenicity by depleting the host's NAD(+) pool. The sequence is that of Conidial surface nicotinamide adenine dinucleotide glycohydrolase nadA from Aspergillus fumigatus (strain ATCC MYA-4609 / CBS 101355 / FGSC A1100 / Af293) (Neosartorya fumigata).